A 62-amino-acid polypeptide reads, in one-letter code: Conotoxin Lt5.8 (62 aa).

The N-terminal stretch at 1-19 (MLCLPVFIILLLLVSPAAT) is a signal peptide. A propeptide spanning residues 20–47 (MPVDLEILKAPTKESRKDFEMRIELLRS) is cleaved from the precursor. Pyrrolidone carboxylic acid is present on Q50. Glutamine amide is present on Q61.

The protein belongs to the conotoxin T superfamily. Contains 2 disulfide bonds that can be either 'C1-C3, C2-C4' or 'C1-C4, C2-C3', since these disulfide connectivities have been observed for conotoxins with cysteine framework V (for examples, see AC P0DQQ7 and AC P81755). In terms of tissue distribution, expressed by the venom duct.

It localises to the secreted. The polypeptide is Conotoxin Lt5.8 (Conus litteratus (Lettered cone)).